The chain runs to 614 residues: RNA polymerase sigma factor RpoD (614 aa).

Positions 168-245 are disordered; the sequence is DPDDNIAAPT…PEEKRSYPQG (78 aa). A compositionally biased stretch (acidic residues) spans 193–209; the sequence is EADDDEEESEGGDDEEE. Positions 215–232 are enriched in polar residues; the sequence is TRSSQPSVSVRYPSSFSD. A sigma-70 factor domain-2 region spans residues 380–450; the sequence is MVEANLRLVI…TRSIADQART (71 aa). The Interaction with polymerase core subunit RpoC signature appears at 404-407; it reads DLIQ. The sigma-70 factor domain-3 stretch occupies residues 459-535; it reads ETINKLNRIS…DSTMQSPIYV (77 aa). A sigma-70 factor domain-4 region spans residues 548-601; the sequence is VLSGLTAREAKVLRMRFGIDMNTDHTLEEVGKQFDVTRERIRQIEAKAWRKLRH. The H-T-H motif DNA-binding region spans 574–593; that stretch reads LEEVGKQFDVTRERIRQIEA.

This sequence belongs to the sigma-70 factor family. RpoD/SigA subfamily. As to quaternary structure, interacts transiently with the RNA polymerase catalytic core.

It localises to the cytoplasm. Its function is as follows. Sigma factors are initiation factors that promote the attachment of RNA polymerase to specific initiation sites and are then released. This sigma factor is the primary sigma factor during exponential growth. The polypeptide is RNA polymerase sigma factor RpoD (Pseudomonas putida (Arthrobacter siderocapsulatus)).